Consider the following 118-residue polypeptide: D-dopachrome decarboxylase (118 aa).

The residue at position 2 (proline 2) is an N-acetylproline. The residue at position 33 (lysine 33) is an N6-acetyllysine.

This sequence belongs to the MIF family. As to quaternary structure, homotrimer.

The protein resides in the cytoplasm. It carries out the reaction D-dopachrome + H(+) = 5,6-dihydroxyindole + CO2. In terms of biological role, tautomerization of D-dopachrome with decarboxylation to give 5,6-dihydroxyindole (DHI). This Bos taurus (Bovine) protein is D-dopachrome decarboxylase (DDT).